Reading from the N-terminus, the 227-residue chain is MGDNYSTYLLDIEGTVCPISFVKETLSPYFTKKVPQLVQQDTRDSPVSNILSQFHIDDKEQLQAHILELVAKDVKDPILKQLQGYIWAQGYESGQIKAPVYADAIDFIKRKKRVFIYSSGSVKAQKLLFGYVQDPNAPAHDSLDLNSYIDGYFDINTSGKKTETQSYANILRDIGAKASEVLFLSDNPLELDAAAGVGIATGLASRPGNAPVPDGQKYQVYKDFETL.

Residues Asp-11 and Glu-13 each coordinate Mg(2+). Substrate contacts are provided by residues 118–119 (SS) and Lys-161. Asp-186 contacts Mg(2+).

This sequence belongs to the HAD-like hydrolase superfamily. MasA/MtnC family. In terms of assembly, monomer. Requires Mg(2+) as cofactor.

The protein resides in the cytoplasm. It localises to the nucleus. It catalyses the reaction 5-methylsulfanyl-2,3-dioxopentyl phosphate + H2O = 1,2-dihydroxy-5-(methylsulfanyl)pent-1-en-3-one + phosphate. It functions in the pathway amino-acid biosynthesis; L-methionine biosynthesis via salvage pathway; L-methionine from S-methyl-5-thio-alpha-D-ribose 1-phosphate: step 3/6. It participates in amino-acid biosynthesis; L-methionine biosynthesis via salvage pathway; L-methionine from S-methyl-5-thio-alpha-D-ribose 1-phosphate: step 4/6. Functionally, bifunctional enzyme that catalyzes the enolization of 2,3-diketo-5-methylthiopentyl-1-phosphate (DK-MTP-1-P) into the intermediate 2-hydroxy-3-keto-5-methylthiopentenyl-1-phosphate (HK-MTPenyl-1-P), which is then dephosphorylated to form the acireductone 1,2-dihydroxy-3-keto-5-methylthiopentene (DHK-MTPene). In Saccharomyces cerevisiae (strain JAY291) (Baker's yeast), this protein is Enolase-phosphatase E1.